The chain runs to 423 residues: Gamma-glutamyl phosphate reductase (423 aa).

Residues methionine 1 to glutamine 14 show a composition bias toward low complexity. The disordered stretch occupies residues methionine 1–aspartate 25. Positions arginine 15 to aspartate 25 are enriched in basic and acidic residues.

The protein belongs to the gamma-glutamyl phosphate reductase family.

It is found in the cytoplasm. The enzyme catalyses L-glutamate 5-semialdehyde + phosphate + NADP(+) = L-glutamyl 5-phosphate + NADPH + H(+). It participates in amino-acid biosynthesis; L-proline biosynthesis; L-glutamate 5-semialdehyde from L-glutamate: step 2/2. Functionally, catalyzes the NADPH-dependent reduction of L-glutamate 5-phosphate into L-glutamate 5-semialdehyde and phosphate. The product spontaneously undergoes cyclization to form 1-pyrroline-5-carboxylate. The sequence is that of Gamma-glutamyl phosphate reductase from Mycobacterium marinum (strain ATCC BAA-535 / M).